A 106-amino-acid polypeptide reads, in one-letter code: uncharacterized protein (106 aa).

The protein belongs to the csb family.

This is an uncharacterized protein from Dictyostelium discoideum (Social amoeba).